Reading from the N-terminus, the 428-residue chain is Spliceosome RNA helicase DDX39B (428 aa).

Residues 1 to 19 show a composition bias toward acidic residues; sequence MAENDVDNELLDYEEDEVE. The disordered stretch occupies residues 1 to 35; the sequence is MAENDVDNELLDYEEDEVENAAGGDGSEAPPKKDV. A Q motif motif is present at residues 45-73; that stretch reads SGFRDFLLKPELLRAIVDCGFEHPSEVQH. Positions 76 to 249 constitute a Helicase ATP-binding domain; sequence IPQAILGMDV…RKFMQDPMEI (174 aa). Residue 89 to 96 coordinates ATP; it reads AKSGMGKT. Residues 196 to 199 carry the DECD box motif; that stretch reads DECD. Residues 261 to 422 form the Helicase C-terminal domain; the sequence is GLQQYYVKLK…ELPDEIDISS (162 aa).

It belongs to the DEAD box helicase family. DECD subfamily. As to quaternary structure, component of the transcription/export (TREX) complex at least composed of ALYREF/THOC4, DDX39B, SARNP/CIP29, CHTOP and the THO subcomplex.

Its subcellular location is the nucleus. The protein resides in the nucleus speckle. The catalysed reaction is ATP + H2O = ADP + phosphate + H(+). Functionally, involved in nuclear export of spliced and unspliced mRNA. Component of the TREX complex which is thought to couple mRNA transcription, processing and nuclear export, and specifically associates with spliced mRNA and not with unspliced pre-mRNA. The TREX complex is recruited to spliced mRNAs by a transcription-independent mechanism, binds to mRNA upstream of the exon-junction complex (EJC) and is recruited in a splicing- and cap-dependent manner to a region near the 5' end of the mRNA where it functions in mRNA export to the cytoplasm via the TAP/NXF1 pathway. Involved in transcription elongation and genome stability. In terms of biological role, splice factor that is required for the first ATP-dependent step in spliceosome assembly and for the interaction of U2 snRNP with the branchpoint. Has both RNA-stimulated ATP binding/hydrolysis activity and ATP-dependent RNA unwinding activity. Even with the stimulation of RNA, the ATPase activity is weak. Can only hydrolyze ATP but not other NTPs. The RNA stimulation of ATPase activity does not have a strong preference for the sequence and length of the RNA. However, ssRNA stimulates the ATPase activity much more strongly than dsRNA. Can unwind 5' or 3' overhangs or blunt end RNA duplexes in vitro. The ATPase and helicase activities are not influenced by U2AF2; the effect of ALYREF/THOC4 is reported conflictingly. The chain is Spliceosome RNA helicase DDX39B (DDX39B) from Gallus gallus (Chicken).